The following is a 193-amino-acid chain: Small ribosomal subunit protein eS1 (193 aa).

Belongs to the eukaryotic ribosomal protein eS1 family.

The protein is Small ribosomal subunit protein eS1 of Sulfurisphaera tokodaii (strain DSM 16993 / JCM 10545 / NBRC 100140 / 7) (Sulfolobus tokodaii).